We begin with the raw amino-acid sequence, 235 residues long: Type III pantothenate kinase (235 aa).

Asp-6 to Lys-13 provides a ligand contact to ATP. Residues Tyr-81 and Gly-88–Arg-91 contribute to the substrate site. The active-site Proton acceptor is the Asp-90. Residue Asp-111 participates in K(+) binding. Thr-114 is a binding site for ATP. Thr-166 is a substrate binding site.

Belongs to the type III pantothenate kinase family. As to quaternary structure, homodimer. NH4(+) is required as a cofactor. K(+) serves as cofactor.

It is found in the cytoplasm. It carries out the reaction (R)-pantothenate + ATP = (R)-4'-phosphopantothenate + ADP + H(+). It functions in the pathway cofactor biosynthesis; coenzyme A biosynthesis; CoA from (R)-pantothenate: step 1/5. Its function is as follows. Catalyzes the phosphorylation of pantothenate (Pan), the first step in CoA biosynthesis. The sequence is that of Type III pantothenate kinase from Cytophaga hutchinsonii (strain ATCC 33406 / DSM 1761 / CIP 103989 / NBRC 15051 / NCIMB 9469 / D465).